The sequence spans 660 residues: Bifunctional polymyxin resistance protein ArnA (660 aa).

Residues 1–304 (MKAVVFAYHD…TLGLVAGARL (304 aa)) are formyltransferase ArnAFT. His104 acts as the Proton donor; for formyltransferase activity in catalysis. Residues Arg114 and 136–140 (VKRAD) each bind (6R)-10-formyltetrahydrofolate. The tract at residues 314-660 (RRTRVLILGV…QSVEPGDAEE (347 aa)) is dehydrogenase ArnADH. NAD(+)-binding positions include Asp347 and 368–369 (DI). UDP-alpha-D-glucuronate contacts are provided by residues Ala393, Tyr398, and 432–433 (TS). The active-site Proton acceptor; for decarboxylase activity is Glu434. Residues Arg460, Asn492, 526–535 (KLIDGGRQKR), and Tyr613 contribute to the UDP-alpha-D-glucuronate site. Residue Arg619 is the Proton donor; for decarboxylase activity of the active site.

This sequence in the N-terminal section; belongs to the Fmt family. UDP-L-Ara4N formyltransferase subfamily. In the C-terminal section; belongs to the NAD(P)-dependent epimerase/dehydratase family. UDP-glucuronic acid decarboxylase subfamily. As to quaternary structure, homohexamer, formed by a dimer of trimers.

It catalyses the reaction UDP-alpha-D-glucuronate + NAD(+) = UDP-beta-L-threo-pentopyranos-4-ulose + CO2 + NADH. It carries out the reaction UDP-4-amino-4-deoxy-beta-L-arabinose + (6R)-10-formyltetrahydrofolate = UDP-4-deoxy-4-formamido-beta-L-arabinose + (6S)-5,6,7,8-tetrahydrofolate + H(+). It functions in the pathway nucleotide-sugar biosynthesis; UDP-4-deoxy-4-formamido-beta-L-arabinose biosynthesis; UDP-4-deoxy-4-formamido-beta-L-arabinose from UDP-alpha-D-glucuronate: step 1/3. Its pathway is nucleotide-sugar biosynthesis; UDP-4-deoxy-4-formamido-beta-L-arabinose biosynthesis; UDP-4-deoxy-4-formamido-beta-L-arabinose from UDP-alpha-D-glucuronate: step 3/3. The protein operates within bacterial outer membrane biogenesis; lipopolysaccharide biosynthesis. Its function is as follows. Bifunctional enzyme that catalyzes the oxidative decarboxylation of UDP-glucuronic acid (UDP-GlcUA) to UDP-4-keto-arabinose (UDP-Ara4O) and the addition of a formyl group to UDP-4-amino-4-deoxy-L-arabinose (UDP-L-Ara4N) to form UDP-L-4-formamido-arabinose (UDP-L-Ara4FN). The modified arabinose is attached to lipid A and is required for resistance to polymyxin and cationic antimicrobial peptides. In Erwinia tasmaniensis (strain DSM 17950 / CFBP 7177 / CIP 109463 / NCPPB 4357 / Et1/99), this protein is Bifunctional polymyxin resistance protein ArnA.